Consider the following 105-residue polypeptide: Small ribosomal subunit protein eS10B (105 aa).

Belongs to the eukaryotic ribosomal protein eS10 family. Component of the small ribosomal subunit (SSU). Mature yeast ribosomes consist of a small (40S) and a large (60S) subunit. The 40S small subunit contains 1 molecule of ribosomal RNA (18S rRNA) and 33 different proteins (encoded by 57 genes). The large 60S subunit contains 3 rRNA molecules (25S, 5.8S and 5S rRNA) and 46 different proteins (encoded by 81 genes). eS10 interacts with GCN1 (via middle region); this interaction is direct and promotes GCN2 kinase activity. Post-translationally, the N-terminus is not modified.

It localises to the cytoplasm. Its function is as follows. Component of the ribosome, a large ribonucleoprotein complex responsible for the synthesis of proteins in the cell. The small ribosomal subunit (SSU) binds messenger RNAs (mRNAs) and translates the encoded message by selecting cognate aminoacyl-transfer RNA (tRNA) molecules. The large subunit (LSU) contains the ribosomal catalytic site termed the peptidyl transferase center (PTC), which catalyzes the formation of peptide bonds, thereby polymerizing the amino acids delivered by tRNAs into a polypeptide chain. The nascent polypeptides leave the ribosome through a tunnel in the LSU and interact with protein factors that function in enzymatic processing, targeting, and the membrane insertion of nascent chains at the exit of the ribosomal tunnel. eS10 plays a role as a positive regulator of the GCN2 kinase activity by stimulating GCN1-mediated GCN2 activation. The chain is Small ribosomal subunit protein eS10B from Saccharomyces cerevisiae (strain ATCC 204508 / S288c) (Baker's yeast).